The primary structure comprises 155 residues: 3-hydroxyacyl-[acyl-carrier-protein] dehydratase FabZ (155 aa).

His-57 is a catalytic residue.

This sequence belongs to the thioester dehydratase family. FabZ subfamily.

Its subcellular location is the cytoplasm. It catalyses the reaction a (3R)-hydroxyacyl-[ACP] = a (2E)-enoyl-[ACP] + H2O. Involved in unsaturated fatty acids biosynthesis. Catalyzes the dehydration of short chain beta-hydroxyacyl-ACPs and long chain saturated and unsaturated beta-hydroxyacyl-ACPs. The protein is 3-hydroxyacyl-[acyl-carrier-protein] dehydratase FabZ of Cereibacter sphaeroides (strain KD131 / KCTC 12085) (Rhodobacter sphaeroides).